Consider the following 257-residue polypeptide: Galactitol 2-dehydrogenase (257 aa).

Residues 21–23, 67–68, N94, Y162, and K166 each bind NAD(+); these read RAI and DV. Catalysis depends on Y162, which acts as the Proton acceptor.

This sequence belongs to the short-chain dehydrogenases/reductases (SDR) family. Homotetramer. It depends on Mg(2+) as a cofactor.

The catalysed reaction is galactitol + NAD(+) = keto-D-tagatose + NADH + H(+). Catalyzes the oxidation of galactitol to D-tagatose. Also catalyzes the oxidation of a wide range of substrates, including polyvalent aliphatic alcohols and polyols, to the corresponding ketones and ketoses. Galactitol is the preferred substrate. The polypeptide is Galactitol 2-dehydrogenase (Rhizobium johnstonii (strain DSM 114642 / LMG 32736 / 3841) (Rhizobium leguminosarum bv. viciae)).